A 286-amino-acid chain; its full sequence is Energy-coupling factor transporter ATP-binding protein EcfA2 (286 aa).

The 244-residue stretch at 3 to 246 (IQFNQVSYIY…KTQLLKWHIE (244 aa)) folds into the ABC transporter domain. 40–47 (GQTGSGKS) serves as a coordination point for ATP.

The protein belongs to the ABC transporter superfamily. Energy-coupling factor EcfA family. As to quaternary structure, forms a stable energy-coupling factor (ECF) transporter complex composed of 2 membrane-embedded substrate-binding proteins (S component), 2 ATP-binding proteins (A component) and 2 transmembrane proteins (T component).

It is found in the cell membrane. In terms of biological role, ATP-binding (A) component of a common energy-coupling factor (ECF) ABC-transporter complex. Unlike classic ABC transporters this ECF transporter provides the energy necessary to transport a number of different substrates. The sequence is that of Energy-coupling factor transporter ATP-binding protein EcfA2 from Staphylococcus epidermidis (strain ATCC 12228 / FDA PCI 1200).